A 434-amino-acid chain; its full sequence is ATP-dependent RNA helicase sub2 (434 aa).

The short motif at 59 to 87 is the Q motif element; that stretch reads TGFRDFLLKGELLRAITDCGFEHPSEVQQ. Residues 90–265 form the Helicase ATP-binding domain; that stretch reads IPTAILNVDV…KKFMRNPLEV (176 aa). Position 103–110 (103–110) interacts with ATP; that stretch reads AKSGLGKT. Positions 212–215 match the DECD box motif; sequence DECD. Residues 293 to 430 enclose the Helicase C-terminal domain; the sequence is KLNELLDSLE…EYPEEGVDSS (138 aa).

This sequence belongs to the DEAD box helicase family. DECD subfamily.

It localises to the nucleus. It catalyses the reaction ATP + H2O = ADP + phosphate + H(+). Functionally, ATP-binding RNA helicase involved in transcription elongation and required for the export of mRNA out of the nucleus. SUB2 also plays a role in pre-mRNA splicing and spliceosome assembly. May be involved in rDNA and telomeric silencing, and maintenance of genome integrity. The polypeptide is ATP-dependent RNA helicase sub2 (sub2) (Emericella nidulans (strain FGSC A4 / ATCC 38163 / CBS 112.46 / NRRL 194 / M139) (Aspergillus nidulans)).